The chain runs to 884 residues: TTSCTDAKGKQYRTADGTCNNVNKPTVGSSMDKFKRDVKPQYDDKKGDPRTKGRCLYKTEKGCYRPDLPSARAISVVVHSKQTSVDDDSSKSSAVSPKMPSMGNLQSLGNLLSLGSVPVPAPAPAPEPVSAPSVDIAPAQPVAGPSITDLLGLMSIIQKPKSKPKPKPKPKPQPKPQPESKPILSQGAIGDILGLLGTLVASPEKETPVSSQPDDSISGLMGKVDEPRIRTPKKSPRKKARQSIFRRRDDRKDDRKGLRGTKGRRDDSDDNDDSDDDDDDIEVRISNVFATAAIKFVAALSPDYIDIRGRKIRLRDTYNNPEMVFDELPELIEEMLQQPTEERNRFISKELTDHFLEDGSRSFDEVASIIQRGRDHGVPPYNWFRQFCGLPIVRSFNSRVFGDAGPYLRKVYKSVDDIDIYTGAMSEPNLPGSLLGETFSCIFARQFRDLKFGDSFFYLSDDPLRGFSKEQRRELDTITLSKAMCFVFGLEAVQMNPLRVPSAQNPLSDCEQIPSFFSFLEDPSEGPRSNLLSRVSQSESVASLSGIMPRFFDAESAGPSMKDNGYEGVGNVLPPAFTTNGVSKTVVGASPRGSERFRDVEVEDPEGGFGMPLPGVPIPSMSSNTDAVSQGDPLNELTQMGGTVDGEVEVEEPEIPGPQEGKASGSLPRAFTDGRQMPLGSSPGSLGGVQGSATQPDALDPTILPGVPLDLQPKAQDPTKLPGVPEYLQPKPKSSGLSTQGAVGGEMGKGEIELEDQLGSHGVAGGAVEVGEAEGAAGGIDGSVGSGGMGGSVGVGGSGGMGGSVGVGGMGGSVGVGGSGGMGGSVGVGGMGGSVGVGGSVGSGGSGGSRGAGGSGDDGDDCCQDDSKCSDDEKQKYCKNSDTK.

Disordered regions lie at residues 1-53, 78-188, 204-279, 653-695, 710-744, and 828-884; these read TTSC…RTKG, VHSK…SQGA, EKET…DDDD, PEIP…SATQ, DLQPKAQDPTKLPGVPEYLQPKPKSSGLSTQGAVG, and VGGM…SDTK. Positions 17–29 are enriched in polar residues; the sequence is GTCNNVNKPTVGS. Basic and acidic residues predominate over residues 32–53; the sequence is DKFKRDVKPQYDDKKGDPRTKG. Residues 91 to 118 show a composition bias toward low complexity; the sequence is KSSAVSPKMPSMGNLQSLGNLLSLGSVP. The segment covering 119–129 has biased composition (pro residues); sequence VPAPAPAPEPV. Composition is skewed to basic residues over residues 160-172 and 230-245; these read PKSKPKPKPKPKP and RTPKKSPRKKARQSIF. A compositionally biased stretch (basic and acidic residues) spans 246–267; sequence RRRDDRKDDRKGLRGTKGRRDD. Over residues 268-279 the composition is skewed to acidic residues; sequence SDDNDDSDDDDD. Gly residues predominate over residues 828–856; the sequence is VGGMGGSVGVGGSVGSGGSGGSRGAGGSG. Positions 865 to 884 are enriched in basic and acidic residues; the sequence is DDSKCSDDEKQKYCKNSDTK.

It belongs to the peroxidase family. As to expression, component of the acid-insoluble and acid-soluble organic matrix of calcified layers of the shell (at protein level).

The protein resides in the secreted. This is Peroxidase-like protein 2 from Lottia gigantea (Giant owl limpet).